The chain runs to 856 residues: Alginate lyase 7 (856 aa).

8 PbH1 repeats span residues 133–155 (DYNV…DPHE), 157–179 (TINL…VADF), 180–202 (QIGA…NIVT), 204–226 (SHDI…VVQR), 234–256 (VYNV…LIKM), 257–279 (STDV…RVQG), 280–304 (VEDV…EVIV), and 320–342 (TQNV…GIQE). 9 Hemolysin-type calcium-binding repeats span residues 387-402 (GSTG…IADL), 404-421 (VGGS…NDVL), 422-439 (EGGA…ADIF), 538-549 (GTEGDDSLTGNA), 554-563 (LDGGSGNDSL), 565-581 (GGLG…DDIL), 582-599 (NGGL…ADIF), 715-731 (GGAG…DDIL), and 733-749 (GGSE…ADVF).

The protein belongs to the D-mannuronate C5-epimerase family. It depends on Ca(2+) as a cofactor.

The protein resides in the secreted. It catalyses the reaction Eliminative cleavage of alginate to give oligosaccharides with 4-deoxy-alpha-L-erythro-hex-4-enuronosyl groups at their non-reducing ends and beta-D-mannuronate at their reducing end.. It carries out the reaction [(1-&gt;4)-beta-D-mannuronosyl](n) = [alginate](n). The protein operates within glycan biosynthesis; alginate biosynthesis. With respect to regulation, inhibited by zinc. Its function is as follows. Converts beta-D-mannuronic acid (M) to alpha-L-guluronic acid (G). Has both epimerase and lyase activities. Contributes to abortive encystment by degrading the coat from inside the cyst. Important for cyst germination. The chain is Alginate lyase 7 from Azotobacter vinelandii.